The sequence spans 304 residues: Acetyl-coenzyme A carboxylase carboxyl transferase subunit beta (304 aa).

Positions 23–292 (VWTKCDSCGQ…PNPDAPREGV (270 aa)) constitute a CoA carboxyltransferase N-terminal domain. Positions 27, 30, 46, and 49 each coordinate Zn(2+). A C4-type zinc finger spans residues 27–49 (CDSCGQVLYRAELERNLEVCPKC). The disordered stretch occupies residues 284 to 304 (NPDAPREGVVVPPAPDQESEV).

It belongs to the AccD/PCCB family. In terms of assembly, acetyl-CoA carboxylase is a heterohexamer composed of biotin carboxyl carrier protein (AccB), biotin carboxylase (AccC) and two subunits each of ACCase subunit alpha (AccA) and ACCase subunit beta (AccD). The cofactor is Zn(2+).

The protein resides in the cytoplasm. The catalysed reaction is N(6)-carboxybiotinyl-L-lysyl-[protein] + acetyl-CoA = N(6)-biotinyl-L-lysyl-[protein] + malonyl-CoA. Its pathway is lipid metabolism; malonyl-CoA biosynthesis; malonyl-CoA from acetyl-CoA: step 1/1. In terms of biological role, component of the acetyl coenzyme A carboxylase (ACC) complex. Biotin carboxylase (BC) catalyzes the carboxylation of biotin on its carrier protein (BCCP) and then the CO(2) group is transferred by the transcarboxylase to acetyl-CoA to form malonyl-CoA. The polypeptide is Acetyl-coenzyme A carboxylase carboxyl transferase subunit beta (Salmonella paratyphi A (strain ATCC 9150 / SARB42)).